Reading from the N-terminus, the 293-residue chain is Diaminopimelate epimerase (293 aa).

Positions 17, 47, and 67 each coordinate substrate. Cys76 functions as the Proton donor in the catalytic mechanism. Residues Gly77 to Asn78, Asn164, Asn197, and Glu215 to Arg216 contribute to the substrate site. Residue Cys224 is the Proton acceptor of the active site. Residue Gly225–Ser226 participates in substrate binding.

Belongs to the diaminopimelate epimerase family. As to quaternary structure, homodimer.

The protein localises to the cytoplasm. It catalyses the reaction (2S,6S)-2,6-diaminopimelate = meso-2,6-diaminopimelate. It functions in the pathway amino-acid biosynthesis; L-lysine biosynthesis via DAP pathway; DL-2,6-diaminopimelate from LL-2,6-diaminopimelate: step 1/1. In terms of biological role, catalyzes the stereoinversion of LL-2,6-diaminopimelate (L,L-DAP) to meso-diaminopimelate (meso-DAP), a precursor of L-lysine and an essential component of the bacterial peptidoglycan. The polypeptide is Diaminopimelate epimerase (Rhodopseudomonas palustris (strain BisB5)).